The following is a 349-amino-acid chain: Phosphoribosylformylglycinamidine cyclo-ligase (349 aa).

This sequence belongs to the AIR synthase family.

It is found in the cytoplasm. It carries out the reaction 2-formamido-N(1)-(5-O-phospho-beta-D-ribosyl)acetamidine + ATP = 5-amino-1-(5-phospho-beta-D-ribosyl)imidazole + ADP + phosphate + H(+). It functions in the pathway purine metabolism; IMP biosynthesis via de novo pathway; 5-amino-1-(5-phospho-D-ribosyl)imidazole from N(2)-formyl-N(1)-(5-phospho-D-ribosyl)glycinamide: step 2/2. The protein is Phosphoribosylformylglycinamidine cyclo-ligase of Methanococcus maripaludis (strain DSM 14266 / JCM 13030 / NBRC 101832 / S2 / LL).